The following is a 219-amino-acid chain: Ribosomal RNA small subunit methyltransferase I (219 aa).

The protein belongs to the methyltransferase superfamily. RsmI family.

The protein resides in the cytoplasm. It catalyses the reaction cytidine(1402) in 16S rRNA + S-adenosyl-L-methionine = 2'-O-methylcytidine(1402) in 16S rRNA + S-adenosyl-L-homocysteine + H(+). In terms of biological role, catalyzes the 2'-O-methylation of the ribose of cytidine 1402 (C1402) in 16S rRNA. This chain is Ribosomal RNA small subunit methyltransferase I, found in Coprothermobacter proteolyticus (strain ATCC 35245 / DSM 5265 / OCM 4 / BT).